The sequence spans 222 residues: MDGTDAEAPGQTAPSRAESLVAHAEASISEDALLAAARERAVDIGAGAVTPAVGALLSLLTKLSGGKAIAEVGTGAGVSGLWLLSGMSDDGVLTTIDIEPEYLRLAKQAFAEAGIGPSRTRLIGGRAQEVLTRLADESYDLVFIDADPIDQPDYVVEGVRLLRPGGVIVVHRAALGGRAGDPAARDAEVVAVREAARLIAEDERLTPALVPLGDGILAAVRD.

S-adenosyl-L-methionine contacts are provided by residues Val49, Glu71, 73–74, Ser79, Asp97, and Ile98; that span reads GT. Position 145 (Asp145) interacts with substrate. An S-adenosyl-L-methionine-binding site is contributed by Asp147.

Belongs to the class I-like SAM-binding methyltransferase superfamily. Cation-dependent O-methyltransferase family.

The protein is Putative O-methyltransferase MAV_1364 of Mycobacterium avium (strain 104).